The sequence spans 315 residues: Type II methyltransferase M.Bsp6I (315 aa).

The region spanning 2–315 is the SAM-dependent MTase C5-type domain; sequence LQIASLFAGV…IAENIYKSML (314 aa). The active site involves Cys73.

Belongs to the class I-like SAM-binding methyltransferase superfamily. C5-methyltransferase family.

The enzyme catalyses a 2'-deoxycytidine in DNA + S-adenosyl-L-methionine = a 5-methyl-2'-deoxycytidine in DNA + S-adenosyl-L-homocysteine + H(+). Its function is as follows. A methylase that recognizes the double-stranded sequence 5'-GCNGC-3', methylates C-? on both strands, and protects the DNA from cleavage by the Bsp6I endonuclease. The chain is Type II methyltransferase M.Bsp6I from Bacillus sp. (strain RFL6).